The sequence spans 176 residues: Large ribosomal subunit protein uL6 (176 aa).

This sequence belongs to the universal ribosomal protein uL6 family. In terms of assembly, part of the 50S ribosomal subunit.

Functionally, this protein binds to the 23S rRNA, and is important in its secondary structure. It is located near the subunit interface in the base of the L7/L12 stalk, and near the tRNA binding site of the peptidyltransferase center. This Burkholderia ambifaria (strain ATCC BAA-244 / DSM 16087 / CCUG 44356 / LMG 19182 / AMMD) (Burkholderia cepacia (strain AMMD)) protein is Large ribosomal subunit protein uL6.